We begin with the raw amino-acid sequence, 481 residues long: Pentatricopeptide repeat-containing protein At2g48000 (481 aa).

PPR repeat units lie at residues 147–181 (TTSV…QDGP), 187–221 (SVST…NILP), 222–256 (DSST…LVKP), 257–287 (TLAT…VKRH), 292–324 (EIKL…LIPK), 328–362 (KPWL…GLQI), 364–398 (TDGI…GWKM), 399–433 (SRSM…KISR), and 434–469 (SKKT…GHDF).

The protein belongs to the PPR family. P subfamily.

The polypeptide is Pentatricopeptide repeat-containing protein At2g48000 (Arabidopsis thaliana (Mouse-ear cress)).